Here is a 285-residue protein sequence, read N- to C-terminus: Protease HtpX homolog (285 aa).

2 consecutive transmembrane segments (helical) span residues 7-27 (TAML…MIGG) and 30-50 (GMTI…WFSD). His-131 is a Zn(2+) binding site. The active site involves Glu-132. Residue His-135 participates in Zn(2+) binding. Helical transmembrane passes span 146–166 (ITAT…FFGG) and 177–197 (IAGI…QMAI). Residue Glu-202 coordinates Zn(2+).

Belongs to the peptidase M48B family. Zn(2+) serves as cofactor.

It is found in the cell inner membrane. The protein is Protease HtpX homolog of Burkholderia cenocepacia (strain HI2424).